The sequence spans 108 residues: Iron-sulfur cluster assembly protein CyaY (108 aa).

The protein belongs to the frataxin family.

Its function is as follows. Involved in iron-sulfur (Fe-S) cluster assembly. May act as a regulator of Fe-S biogenesis. This Pseudomonas paraeruginosa (strain DSM 24068 / PA7) (Pseudomonas aeruginosa (strain PA7)) protein is Iron-sulfur cluster assembly protein CyaY.